The chain runs to 89 residues: Barrier-to-autointegration factor (89 aa).

At methionine 1 the chain carries N-acetylmethionine. Threonine 2 carries the N-acetylthreonine; in Barrier-to-autointegration factor, N-terminally processed modification. Phosphothreonine; by VRK1 and VRK2 occurs at positions 2 and 3. The residue at position 4 (serine 4) is a Phosphoserine; by VRK1 and VRK2. The HhH domain occupies valine 20–glutamate 35.

This sequence belongs to the BAF family. Homodimer. Heterodimerizes with BANF2. Interacts with ANKLE2/LEM4, leading to decreased phosphorylation by VRK1 and promoting dephosphorylation by protein phosphatase 2A (PP2A). Binds non-specifically to double-stranded DNA, and is found as a hexamer or dodecamer upon DNA binding. Binds to LEM domain-containing nuclear proteins such as LEMD3/MAN1, TMPO/LAP2 and EMD (emerin). Interacts with ANKLE1 (via LEM domain); the interaction may favor BANF1 dimerization. Interacts with CRX and LMNA (lamin-A). Binds linker histone H1.1 and core histones H3. Interacts with LEMD2 (via LEM domain). Interacts with PARP1; interaction takes place in response to oxidative DNA damage. Post-translationally, ser-4 is the major site of phosphorylation as compared to Thr-2 and Thr-3. Phosphorylation on Thr-2; Thr-3 and Ser-4 disrupts its ability to bind DNA and reduces its ability to bind LEM domain-containing proteins. Non phosphorylated BAF seems to enhance binding between EMD and LMNA. Dephosphorylated by protein phosphatase 2A (PP2A) following interaction with ANKLE2/LEM4 during mitotic exit, leading to mitotic nuclear envelope reassembly.

Its subcellular location is the nucleus. It localises to the chromosome. The protein localises to the nucleus envelope. It is found in the cytoplasm. Functionally, non-specific DNA-binding protein that plays key roles in mitotic nuclear reassembly, chromatin organization, DNA damage response, gene expression and intrinsic immunity against foreign DNA. Contains two non-specific double-stranded DNA (dsDNA)-binding sites which promote DNA cross-bridging. Plays a key role in nuclear membrane reformation at the end of mitosis by driving formation of a single nucleus in a spindle-independent manner. Transiently cross-bridges anaphase chromosomes via its ability to bridge distant DNA sites, leading to the formation of a dense chromatin network at the chromosome ensemble surface that limits membranes to the surface. Also acts as a negative regulator of innate immune activation by restricting CGAS activity toward self-DNA upon acute loss of nuclear membrane integrity. Outcompetes CGAS for DNA-binding, thereby preventing CGAS activation and subsequent damaging autoinflammatory responses. Also involved in DNA damage response: interacts with PARP1 in response to oxidative stress, thereby inhibiting the ADP-ribosyltransferase activity of PARP1. Involved in the recognition of exogenous dsDNA in the cytosol: associates with exogenous dsDNA immediately after its appearance in the cytosol at endosome breakdown and is required to avoid autophagy. The sequence is that of Barrier-to-autointegration factor from Mus musculus (Mouse).